Consider the following 357-residue polypeptide: 5-hydroxytryptamine receptor 5A (357 aa).

Residues 1-36 are Extracellular-facing; sequence MDLPVNLTSFSLSTPSPLETNHSLGKDDLRPSSPLL. N-linked (GlcNAc...) asparagine glycosylation is found at Asn-6 and Asn-21. Residues 37 to 63 form a helical membrane-spanning segment; sequence SVFGVLILTLLGFLVAATFAWNLLVLA. The Cytoplasmic segment spans residues 64–76; the sequence is TILRVRTFHRVPH. Residues 77–103 form a helical membrane-spanning segment; that stretch reads NLVASMAVSDVLVAALVMPLSLVHELS. Over 104 to 114 the chain is Extracellular; it reads GRRWQLGRRLC. Cys-114 and Cys-192 form a disulfide bridge. The helical transmembrane segment at 115–137 threads the bilayer; that stretch reads QLWIACDVLCCTASIWNVTAIAL. Residue Asp-121 participates in serotonin binding. At 138–155 the chain is on the cytoplasmic side; it reads DRYWSITRHMEYTLRTRK. The helical transmembrane segment at 156–176 threads the bilayer; it reads CVSNVMIALTWALSAVISLAP. The Extracellular segment spans residues 177–198; it reads LLFGWGETYSEGSEECQVSREP. Residues 199–220 traverse the membrane as a helical segment; that stretch reads SYAVFSTVGAFYLPLCVVLFVY. Topologically, residues 221–287 are cytoplasmic; sequence WKIYKAAKFR…QKEQRAALMV (67 aa). The chain crosses the membrane as a helical span at residues 288 to 312; sequence GILIGVFVLCWIPFFLTELISPLCS. Over 313–314 the chain is Extracellular; sequence CD. Residues 315–339 traverse the membrane as a helical segment; the sequence is IPAIWKSIFLWLGYSNSFFNPLIYT. At 340–357 the chain is on the cytoplasmic side; it reads AFNKNYNSAFKNFFSRQH.

This sequence belongs to the G-protein coupled receptor 1 family.

It localises to the cell membrane. Functionally, G-protein coupled receptor for 5-hydroxytryptamine (serotonin), a biogenic hormone that functions as a neurotransmitter, a hormone and a mitogen. Also functions as a receptor for ergot alkaloid derivatives and other psychoactive substances. Ligand binding causes a conformation change that triggers signaling via guanine nucleotide-binding proteins (G proteins) and modulates the activity of downstream effectors. HTR5A is coupled to G(i)/G(o) G alpha proteins and mediates inhibitory neurotransmission: signaling inhibits adenylate cyclase activity and activates a phosphatidylinositol-calcium second messenger system that regulates the release of Ca(2+) ions from intracellular stores. The chain is 5-hydroxytryptamine receptor 5A from Homo sapiens (Human).